Here is an 80-residue protein sequence, read N- to C-terminus: Exodeoxyribonuclease 7 small subunit (80 aa).

Belongs to the XseB family. As to quaternary structure, heterooligomer composed of large and small subunits.

It is found in the cytoplasm. The enzyme catalyses Exonucleolytic cleavage in either 5'- to 3'- or 3'- to 5'-direction to yield nucleoside 5'-phosphates.. Bidirectionally degrades single-stranded DNA into large acid-insoluble oligonucleotides, which are then degraded further into small acid-soluble oligonucleotides. This Rickettsia conorii (strain ATCC VR-613 / Malish 7) protein is Exodeoxyribonuclease 7 small subunit.